A 606-amino-acid chain; its full sequence is ATP-dependent rRNA helicase SPB4 (606 aa).

Residues 7 to 35 carry the Q motif motif; the sequence is WDNLGFSLLPWIRTGLDVMGFETMTPVQA. Residues 38–224 form the Helicase ATP-binding domain; that stretch reads IPMLAGNKDV…KTGLRNPVRI (187 aa). 51–58 serves as a coordination point for ATP; that stretch reads SVTGSGKT. Residues 172–175 carry the DEAD box motif; the sequence is DEAD. The 157-residue stretch at 248–404 folds into the Helicase C-terminal domain; that stretch reads KLQLLVSILN…ELDLEVKGIT (157 aa). Position 254 is a phosphoserine (S254). A coiled-coil region spans residues 539–582; it reads KTLTKERKLERKEKMSLKRKAIEEELKAEELDENAEEERIKEDW.

The protein belongs to the DEAD box helicase family. DDX55/SPB4 subfamily. As to quaternary structure, component of pre-60S ribosomal complexes.

The protein resides in the nucleus. It is found in the nucleolus. The catalysed reaction is ATP + H2O = ADP + phosphate + H(+). Its function is as follows. ATP-binding RNA helicase involved in the biogenesis of 60S ribosomal subunits. Binds 90S pre-ribosomal particles and dissociates from pre-60S ribosomal particles after processing of 27SB pre-rRNA. Required for the normal formation of 18S rRNA through the processing of pre-rRNAs at sites A0, A1 and A2, and the normal formation of 25S and 5.8S rRNAs through the processing of pre-rRNAs at sites C1 and C2. Also required for recruitment of NOG2 to pre-ribosomes. The polypeptide is ATP-dependent rRNA helicase SPB4 (Saccharomyces cerevisiae (strain ATCC 204508 / S288c) (Baker's yeast)).